Here is a 213-residue protein sequence, read N- to C-terminus: Skin granule protein (213 aa).

The first 26 residues, 1–26 (METMYHRFLCIPFLLILGLAQGQSKG), serve as a signal peptide directing secretion. 3 consecutive repeat copies span residues 27–48 (LQTV…IRTG), 49–70 (LQPI…IRTG), and 71–92 (LQPI…IRTG). The tract at residues 27–104 (LQTVTTFRTG…PIATFQTGVQ (78 aa)) is 4 X 22 AA approximate tandem repeats. Residues 93-104 (LQPIATFQTGVQ) form a 4; truncated repeat. The interval 162 to 213 (WHGGRNGHKMKKLGKKKHHKNRHGGKNHHKMKKIGKHHGGGRKFGKKHRHHK) is disordered. Positions 166-213 (RNGHKMKKLGKKKHHKNRHGGKNHHKMKKIGKHHGGGRKFGKKHRHHK) are enriched in basic residues.

The protein localises to the secreted. The chain is Skin granule protein (sgp) from Xenopus laevis (African clawed frog).